Here is a 394-residue protein sequence, read N- to C-terminus: Ornithine aminotransferase 1 (394 aa).

At Lys-252 the chain carries N6-(pyridoxal phosphate)lysine.

It belongs to the class-III pyridoxal-phosphate-dependent aminotransferase family. OAT subfamily. Requires pyridoxal 5'-phosphate as cofactor.

The protein resides in the cytoplasm. The enzyme catalyses a 2-oxocarboxylate + L-ornithine = L-glutamate 5-semialdehyde + an L-alpha-amino acid. It participates in amino-acid biosynthesis; L-proline biosynthesis; L-glutamate 5-semialdehyde from L-ornithine: step 1/1. Its function is as follows. Catalyzes the interconversion of ornithine to glutamate semialdehyde. The polypeptide is Ornithine aminotransferase 1 (Staphylococcus saprophyticus subsp. saprophyticus (strain ATCC 15305 / DSM 20229 / NCIMB 8711 / NCTC 7292 / S-41)).